A 103-amino-acid chain; its full sequence is DNA-directed RNA polymerase subunit omega (103 aa).

This sequence belongs to the RNA polymerase subunit omega family. In terms of assembly, the RNAP catalytic core consists of 2 alpha, 1 beta, 1 beta' and 1 omega subunit. When a sigma factor is associated with the core the holoenzyme is formed, which can initiate transcription.

The enzyme catalyses RNA(n) + a ribonucleoside 5'-triphosphate = RNA(n+1) + diphosphate. Its function is as follows. Promotes RNA polymerase assembly. Latches the N- and C-terminal regions of the beta' subunit thereby facilitating its interaction with the beta and alpha subunits. The protein is DNA-directed RNA polymerase subunit omega of Streptococcus agalactiae serotype III (strain NEM316).